Reading from the N-terminus, the 188-residue chain is GMP synthase [glutamine-hydrolyzing] subunit A (188 aa).

One can recognise a Glutamine amidotransferase type-1 domain in the interval 2-188 (KVGLVYYGGQ…FKNFLGVCRK (187 aa)). The active-site Nucleophile is the Cys79. Residues His166 and Glu168 contribute to the active site.

In terms of assembly, heterodimer composed of a glutamine amidotransferase subunit (A) and a GMP-binding subunit (B).

It carries out the reaction XMP + L-glutamine + ATP + H2O = GMP + L-glutamate + AMP + diphosphate + 2 H(+). Its pathway is purine metabolism; GMP biosynthesis; GMP from XMP (L-Gln route): step 1/1. In terms of biological role, catalyzes the synthesis of GMP from XMP. The chain is GMP synthase [glutamine-hydrolyzing] subunit A from Saccharolobus solfataricus (strain ATCC 35092 / DSM 1617 / JCM 11322 / P2) (Sulfolobus solfataricus).